A 241-amino-acid chain; its full sequence is Triosephosphate isomerase (241 aa).

9 to 11 (NWK) is a substrate binding site. The active-site Electrophile is histidine 88. Glutamate 158 (proton acceptor) is an active-site residue. Substrate contacts are provided by residues glycine 164, serine 203, and 224–225 (GG).

The protein belongs to the triosephosphate isomerase family. In terms of assembly, homodimer.

It is found in the cytoplasm. The enzyme catalyses D-glyceraldehyde 3-phosphate = dihydroxyacetone phosphate. It participates in carbohydrate biosynthesis; gluconeogenesis. It functions in the pathway carbohydrate degradation; glycolysis; D-glyceraldehyde 3-phosphate from glycerone phosphate: step 1/1. Its function is as follows. Involved in the gluconeogenesis. Catalyzes stereospecifically the conversion of dihydroxyacetone phosphate (DHAP) to D-glyceraldehyde-3-phosphate (G3P). This chain is Triosephosphate isomerase, found in Dichelobacter nodosus (strain VCS1703A).